The sequence spans 82 residues: UPF0729 protein C18orf32 homolog (82 aa).

The segment at 1-37 (MVCIPCIVIPVLLWVYKKFLEPIVYPFISPIINRIWP) is necessary for its localzation to the endoplasmic reticulum and lipid droplets. A disordered region spans residues 46 to 82 (TSAKKEESNGTCKASGTSITNGSVSRGEEAVPDKKTD). Over residues 54-69 (NGTCKASGTSITNGSV) the composition is skewed to polar residues. Basic and acidic residues predominate over residues 71–82 (RGEEAVPDKKTD).

Belongs to the UPF0729 family.

The protein localises to the endoplasmic reticulum. It localises to the lipid droplet. The protein is UPF0729 protein C18orf32 homolog of Xenopus tropicalis (Western clawed frog).